Consider the following 368-residue polypeptide: Peptidoglycan-recognition protein LA (368 aa).

Over 1–127 (MFEENNSPTT…KSPSRRVTRN (127 aa)) the chain is Cytoplasmic. 2 disordered regions span residues 21–46 (QRAS…GLPL) and 101–122 (INSN…SPSR). Composition is skewed to low complexity over residues 33 to 43 (TSAGSSTSSSG) and 102 to 113 (NSNNANGNGNAN). Residues 128 to 148 (TILLITLILLVLATGLIVLYV) form a helical membrane-spanning segment. The Extracellular portion of the chain corresponds to 149–368 (ELNRPKPELP…MKTESWDAKQ (220 aa)). A disulfide bond links C221 and C227. Residues 233 to 320 (TIQDSAIAEK…DVDYKLVAQN (88 aa)) form the N-acetylmuramoyl-L-alanine amidase domain. 2 N-linked (GlcNAc...) asparagine glycosylation sites follow: N273 and N320.

Belongs to the N-acetylmuramoyl-L-alanine amidase 2 family. Expressed in uninduced hemocytes and mbn-2 cells.

It localises to the cell membrane. Functionally, peptidoglycan-recognition protein probably involved in innate immunity by binding to peptidoglycans (PGN) of bacteria and activating the immune response. This Drosophila melanogaster (Fruit fly) protein is Peptidoglycan-recognition protein LA (PGRP-LA).